The chain runs to 154 residues: MSLVRNSSRLLRSQLKRVQSVPVALYHENVVEHYENPRNVGSLDKKDVTVGTGLVGAPACGDVMKLQIKVDENGKIVDAKFKTFGCGSAIASSSLATEWVKGKSIDEAGKLKNTDIAKELRLPPVKLHCSMLAEDAIKAALADYKVKQQKKVAN.

It belongs to the NifU family. Component of the mitochondrial core iron-sulfur cluster (ISC) assembly complex at least composed of the cystein desulfurase Nfs1, the scaffold protein IscU, the accessory protein bcn92/Isd11/Lyrm4, and probably fh/frataxin. Interacts with Nfs1. Fe(2+) serves as cofactor. The cofactor is [2Fe-2S] cluster.

Its pathway is cofactor biosynthesis; iron-sulfur cluster biosynthesis. Scaffold protein for the de novo synthesis of iron-sulfur (Fe-S) clusters within mitochondria, which is required for maturation of both mitochondrial and cytoplasmic [2Fe-2S] and [4Fe-4S] proteins. Component of the mitochondrial core iron-sulfur cluster (ISC) assembly complex; regulates its activity. This is Iron-sulfur cluster assembly enzyme IscU from Drosophila melanogaster (Fruit fly).